A 222-amino-acid chain; its full sequence is Ribulose-phosphate 3-epimerase (222 aa).

Serine 7 is a binding site for substrate. Residues histidine 32, aspartate 34, and histidine 65 each coordinate a divalent metal cation. Catalysis depends on aspartate 34, which acts as the Proton acceptor. Substrate-binding positions include histidine 65, 141–144 (GFSG), 174–176 (DGG), and 196–197 (GS). Aspartate 174 contacts a divalent metal cation. The active-site Proton donor is aspartate 174.

The protein belongs to the ribulose-phosphate 3-epimerase family. Requires a divalent metal cation as cofactor.

The catalysed reaction is D-ribulose 5-phosphate = D-xylulose 5-phosphate. Its pathway is carbohydrate degradation. Catalyzes the reversible epimerization of D-ribulose 5-phosphate to D-xylulose 5-phosphate. In Aquifex aeolicus (strain VF5), this protein is Ribulose-phosphate 3-epimerase.